Consider the following 320-residue polypeptide: Cytochrome f (320 aa).

A signal peptide spans 1–35 (MQTRNTFSWIREEITRSISVSLIIYIITRASISSA). Heme-binding residues include tyrosine 36, cysteine 56, cysteine 59, and histidine 60. A helical transmembrane segment spans residues 286–306 (VQGLLFFLASVVLAQIFLVLK).

The protein belongs to the cytochrome f family. The 4 large subunits of the cytochrome b6-f complex are cytochrome b6, subunit IV (17 kDa polypeptide, petD), cytochrome f and the Rieske protein, while the 4 small subunits are PetG, PetL, PetM and PetN. The complex functions as a dimer. It depends on heme as a cofactor.

The protein resides in the plastid. It is found in the chloroplast thylakoid membrane. Its function is as follows. Component of the cytochrome b6-f complex, which mediates electron transfer between photosystem II (PSII) and photosystem I (PSI), cyclic electron flow around PSI, and state transitions. In Draba nemorosa (Woodland whitlowgrass), this protein is Cytochrome f.